The sequence spans 239 residues: Probable transcriptional regulatory protein VC_A0006 (239 aa).

It belongs to the TACO1 family.

It is found in the cytoplasm. The sequence is that of Probable transcriptional regulatory protein VC_A0006 from Vibrio cholerae serotype O1 (strain ATCC 39315 / El Tor Inaba N16961).